The following is a 100-amino-acid chain: Urease subunit gamma (100 aa).

It belongs to the urease gamma subunit family. As to quaternary structure, heterotrimer of UreA (gamma), UreB (beta) and UreC (alpha) subunits. Three heterotrimers associate to form the active enzyme.

Its subcellular location is the cytoplasm. The enzyme catalyses urea + 2 H2O + H(+) = hydrogencarbonate + 2 NH4(+). It participates in nitrogen metabolism; urea degradation; CO(2) and NH(3) from urea (urease route): step 1/1. This chain is Urease subunit gamma, found in Haemophilus influenzae (strain ATCC 51907 / DSM 11121 / KW20 / Rd).